The following is a 364-amino-acid chain: tRNA 2-selenouridine synthase (364 aa).

Positions 14 to 137 constitute a Rhodanese domain; the sequence is LLADTPLIDV…LRQTAIQATW (124 aa). Residue Cys97 is the S-selanylcysteine intermediate of the active site. Gly149 is a binding site for (2E)-geranyl diphosphate.

The protein belongs to the SelU family. As to quaternary structure, monomer.

It carries out the reaction 5-methylaminomethyl-2-thiouridine(34) in tRNA + selenophosphate + (2E)-geranyl diphosphate + H2O + H(+) = 5-methylaminomethyl-2-selenouridine(34) in tRNA + (2E)-thiogeraniol + phosphate + diphosphate. It catalyses the reaction 5-methylaminomethyl-2-thiouridine(34) in tRNA + (2E)-geranyl diphosphate = 5-methylaminomethyl-S-(2E)-geranyl-thiouridine(34) in tRNA + diphosphate. The catalysed reaction is 5-methylaminomethyl-S-(2E)-geranyl-thiouridine(34) in tRNA + selenophosphate + H(+) = 5-methylaminomethyl-2-(Se-phospho)selenouridine(34) in tRNA + (2E)-thiogeraniol. The enzyme catalyses 5-methylaminomethyl-2-(Se-phospho)selenouridine(34) in tRNA + H2O = 5-methylaminomethyl-2-selenouridine(34) in tRNA + phosphate. Its function is as follows. Involved in the post-transcriptional modification of the uridine at the wobble position (U34) of tRNA(Lys), tRNA(Glu) and tRNA(Gln). Catalyzes the conversion of 2-thiouridine (S2U-RNA) to 2-selenouridine (Se2U-RNA). Acts in a two-step process involving geranylation of 2-thiouridine (S2U) to S-geranyl-2-thiouridine (geS2U) and subsequent selenation of the latter derivative to 2-selenouridine (Se2U) in the tRNA chain. The sequence is that of tRNA 2-selenouridine synthase from Salmonella typhimurium (strain LT2 / SGSC1412 / ATCC 700720).